Consider the following 557-residue polypeptide: MSDPEMAWVPEPPAMTLGASRVELRVSCHGLLDRDTLTKPHPCVLLKLHSDEQWVEVERTEVLRSCSSPVFSRVLALEYFFEEKQPLQFHVFDAEDGSTSPRNDTFLGSTECTLGQIVSQTKVTKPLLLKNGKNAGKSTITIVAEEVSGTNDYVQLTFRAHKLDNKDLFSKSDPFMEIYKTNGDQSDQLVWRTEVVKNNLNPSWEPFRLSLHSLCSCDVHRPLKFLVYDYDSSGKHDFIGEFTSTFQEMQEGTANPGQEMQWDCINPKYRDKKKHYKSSGTVVLAQCTVEKVHTFLDYIMGGCQISFTVAIDFTASNGDPRSSQSLHCLSPRQPNHYLQALRAVGGICQDYDSDKRFPAFGFGARIPPNFEVSHDFAINFDPENPECEEISGVIASYRRCLPQIQLYGPTNVAPIINRVAGPAQREQSTGQATKYSVLLVLTDGVVSDMAETRTAIVRASRLPMSIIIVGVGNADFSDMRLLDGDDGTLRCPRGVPAARDIVQFVPFRDFKDASPSALAKCVLAEVPRQVVEYYASQGISPGAPRPCTPAMTPSPSP.

C2 domains follow at residues 1 to 127 (MSDP…TKPL) and 134 to 263 (NAGK…MQWD). Ca(2+)-binding residues include aspartate 167, aspartate 173, aspartate 229, aspartate 231, and aspartate 237. The interval 244–303 (STFQEMQEGTANPGQEMQWDCINPKYRDKKKHYKSSGTVVLAQCTVEKVHTFLDYIMGGC) is linker region. One can recognise a VWFA domain in the interval 306–526 (SFTVAIDFTA…ALAKCVLAEV (221 aa)).

The protein belongs to the copine family. As to quaternary structure, interacts (via second C2 domain) with OS9 (via C-terminus); this interaction occurs in a calcium-dependent manner in vitro. May interact with NECAB1. It depends on Ca(2+) as a cofactor.

Its subcellular location is the cytoplasm. It is found in the cell membrane. It localises to the endosome. The protein localises to the cytoplasmic vesicle. The protein resides in the clathrin-coated vesicle. Its subcellular location is the perikaryon. It is found in the cell projection. It localises to the dendrite. In terms of biological role, calcium-dependent phospholipid-binding protein that plays a role in calcium-mediated intracellular processes. Binds phospholipid membranes in a calcium-dependent manner. Plays a role in dendrite formation by melanocytes. The protein is Copine-6 of Bos taurus (Bovine).